Here is a 194-residue protein sequence, read N- to C-terminus: tRNA (guanosine(18)-2'-O)-methyltransferase (194 aa).

S-adenosyl-L-methionine is bound by residues threonine 99, 122-126 (GAEKW), isoleucine 142, and leucine 151.

This sequence belongs to the class IV-like SAM-binding methyltransferase superfamily. RNA methyltransferase TrmH family. As to quaternary structure, monomer.

The catalysed reaction is guanosine(18) in tRNA + S-adenosyl-L-methionine = 2'-O-methylguanosine(18) in tRNA + S-adenosyl-L-homocysteine + H(+). With respect to regulation, stimulated by magnesium ions and spermine. Inhibited by S-adenosyl-homocysteine. Catalyzes the 2'-O methylation of guanosine at position 18 in tRNA. The protein is tRNA (guanosine(18)-2'-O)-methyltransferase of Thermus thermophilus (strain ATCC BAA-163 / DSM 7039 / HB27).